We begin with the raw amino-acid sequence, 568 residues long: TWiK family of potassium channels protein 9 (568 aa).

At 1–15 (MKCSFHIPEKYQWAS) the chain is on the cytoplasmic side. A helical membrane pass occupies residues 16–36 (TLFVHVALIAGVAVYTVFGAL). Residues 163 to 183 (IGNSVIFAFTVITTIGYGHVA) constitute an intramembrane region (pore-forming). A helical transmembrane segment spans residues 191-211 (LFLIFYGVIGVPFTLLTIADL). Residues 212-316 (GMFLTRFLKN…NNEPRKTEES (105 aa)) are Cytoplasmic-facing. Disordered stretches follow at residues 243-262 (QRNKSQKTSPVMPDSERSEV) and 274-314 (MRTA…RKTE). The span at 297-307 (GKEEDEEEPEN) shows a compositional bias: acidic residues. Residues 317–337 (IALGITFTCYLVAGAKILSVY) traverse the membrane as a helical segment. An intramembrane region (pore-forming) is located at residues 343–363 (FFKALYFNFVTLTTIGLGDFV). The chain crosses the membrane as a helical span at residues 370 to 390 (LLITLIYIGIGLALTTMAIEI). At 391–568 (AADLLKKLHY…LRTYTNARRK (178 aa)) the chain is on the cytoplasmic side.

The protein belongs to the two pore domain potassium channel (TC 1.A.1.8) family. As to expression, expressed in ray A-type neurons and cell bodies. Also seen in head, pharyngeal and phasmid neurons, and in coelomocytes.

The protein localises to the membrane. Potassium channel protein that may be component of regulatory network that controls ray development and function. The sequence is that of TWiK family of potassium channels protein 9 (twk-9) from Caenorhabditis elegans.